Here is a 323-residue protein sequence, read N- to C-terminus: METPIKIVAGRSNPELAKKIAAYLGTPLCDAKAENFSDGEISVNYFESIRGSDMFIIQSTNPPADNLMELLIMIDAAKRSSAYRITAVLPYYGYARQDRKDKPRVAITAKLVANLLTQAGADRILTMDLHAPQIQGFFDIPFDHLYSSVVLIDHVKNMDIADNLVVASPDVGGVKLARKFASELGTELVIVDKRRPKANVAEVMNIIGDVKGKNVLLVDDMIDTAGTIVNAAKAIKEAGGLKIYAAATHPILSGPAIERINTSVFEKVIVTDSLVSEHDFCSKIETVTISNLFGEAIKRIYDGESVSYLFDSKNISQKITNHH.

ATP is bound by residues D38 to E40 and R96 to Q97. Mg(2+)-binding residues include H130 and D170. Residue K193 is part of the active site. Residues R195, D219, and D223–T227 each bind D-ribose 5-phosphate.

Belongs to the ribose-phosphate pyrophosphokinase family. Class I subfamily. In terms of assembly, homohexamer. Requires Mg(2+) as cofactor.

Its subcellular location is the cytoplasm. It carries out the reaction D-ribose 5-phosphate + ATP = 5-phospho-alpha-D-ribose 1-diphosphate + AMP + H(+). The protein operates within metabolic intermediate biosynthesis; 5-phospho-alpha-D-ribose 1-diphosphate biosynthesis; 5-phospho-alpha-D-ribose 1-diphosphate from D-ribose 5-phosphate (route I): step 1/1. Functionally, involved in the biosynthesis of the central metabolite phospho-alpha-D-ribosyl-1-pyrophosphate (PRPP) via the transfer of pyrophosphoryl group from ATP to 1-hydroxyl of ribose-5-phosphate (Rib-5-P). The polypeptide is Ribose-phosphate pyrophosphokinase (Chlorobaculum tepidum (strain ATCC 49652 / DSM 12025 / NBRC 103806 / TLS) (Chlorobium tepidum)).